A 142-amino-acid polypeptide reads, in one-letter code: MNKTQSPSLNTNSHWYVIDAKNQTLGRISTHISNILRGKNKPSYTPYLDTGDYVIVINSAHVSVSGNKTNQKLYRRHSGQPGGLKVETFDQLQTRLPNRIIEKSVKGMLPKGPLGRKLFTKLKVYSGPIHPHVAQKPQEYIV.

It belongs to the universal ribosomal protein uL13 family. Part of the 50S ribosomal subunit.

Its subcellular location is the plastid. The protein localises to the chloroplast. The polypeptide is Large ribosomal subunit protein uL13c (Pyropia yezoensis (Susabi-nori)).